A 153-amino-acid polypeptide reads, in one-letter code: Small ribosomal subunit protein uS13 (153 aa).

The disordered stretch occupies residues 129 to 153 (RGQRTKSTFRHGSSVGVSRTRPTGN). Over residues 143–153 (VGVSRTRPTGN) the composition is skewed to polar residues.

The protein belongs to the universal ribosomal protein uS13 family. In terms of assembly, part of the 30S ribosomal subunit. Forms a loose heterodimer with protein S19. Forms two bridges to the 50S subunit in the 70S ribosome.

In terms of biological role, located at the top of the head of the 30S subunit, it contacts several helices of the 16S rRNA. In the 70S ribosome it contacts the 23S rRNA (bridge B1a) and protein L5 of the 50S subunit (bridge B1b), connecting the 2 subunits; these bridges are implicated in subunit movement. In Methanosphaera stadtmanae (strain ATCC 43021 / DSM 3091 / JCM 11832 / MCB-3), this protein is Small ribosomal subunit protein uS13.